Here is a 31-residue protein sequence, read N- to C-terminus: Cytochrome b6-f complex subunit 6 (31 aa).

A helical transmembrane segment spans residues 4–24; sequence ITSYFGFLLVALTITSALFIG.

This sequence belongs to the PetL family. The 4 large subunits of the cytochrome b6-f complex are cytochrome b6, subunit IV (17 kDa polypeptide, PetD), cytochrome f and the Rieske protein, while the 4 small subunits are PetG, PetL, PetM and PetN. The complex functions as a dimer.

The protein resides in the plastid. It is found in the chloroplast thylakoid membrane. In terms of biological role, component of the cytochrome b6-f complex, which mediates electron transfer between photosystem II (PSII) and photosystem I (PSI), cyclic electron flow around PSI, and state transitions. PetL is important for photoautotrophic growth as well as for electron transfer efficiency and stability of the cytochrome b6-f complex. The protein is Cytochrome b6-f complex subunit 6 of Pelargonium hortorum (Common geranium).